A 215-amino-acid polypeptide reads, in one-letter code: Flagellin B1 (215 aa).

A propeptide spanning residues 1 to 12 (MSVKNFMNNKKG) is cleaved from the precursor.

This sequence belongs to the archaeal flagellin family.

The protein localises to the archaeal flagellum. Its function is as follows. Flagellin is the subunit protein which polymerizes to form the filaments of archaeal flagella. The chain is Flagellin B1 (flaB1) from Methanococcus vannielii (strain ATCC 35089 / DSM 1224 / JCM 13029 / OCM 148 / SB).